A 199-amino-acid chain; its full sequence is Thymidine kinase (199 aa).

ATP is bound by residues 23–30 (GSMFSGKT) and 95–98 (DEAQ). Glu-96 acts as the Proton acceptor in catalysis. Residues Cys-152, Cys-155, Cys-184, and Cys-187 each coordinate Zn(2+).

This sequence belongs to the thymidine kinase family. As to quaternary structure, homotetramer.

The protein localises to the cytoplasm. It catalyses the reaction thymidine + ATP = dTMP + ADP + H(+). In Bacteroides thetaiotaomicron (strain ATCC 29148 / DSM 2079 / JCM 5827 / CCUG 10774 / NCTC 10582 / VPI-5482 / E50), this protein is Thymidine kinase.